Here is a 797-residue protein sequence, read N- to C-terminus: Inactive deaminase YBR284W (797 aa).

A helical membrane pass occupies residues 627–647 (LVYLFYLSQIPMVVAPLNSIV).

This sequence belongs to the metallo-dependent hydrolases superfamily. Adenosine and AMP deaminases family.

It localises to the membrane. The polypeptide is Inactive deaminase YBR284W (Saccharomyces cerevisiae (strain ATCC 204508 / S288c) (Baker's yeast)).